Here is a 371-residue protein sequence, read N- to C-terminus: MDFQLQATDKHARAGLLNLAHSQVATPVFMPVGTQGCIKSLDATDAQEILGAKLILANTYHMYLRPGEKAVGQLGGLHRFAQFQGSFLTDSGGFQAFSLSNNVKLQEDGIVFKSHIDGSKHLFTPIKVLDIQYSLNSDIMMVLDDLVGLPAPLKRLEESIKRSAKWANLSLEYHKEKNRPNNNLFAIIQGGTHLKMRSLSVGLTHKGFDGYAIGGLAVGESVDEMLETIAHTAPLLPKDKPRYLMGVGTPENILDAISLGVDMFDCVMPTRNARNATLFTHFGKISIKNAPYKLDDTPIEENCACYTCKRYSKAYLHHLFRAKELTYARLASLHNLHFYLELVKNARNAILEKRFLSFKKEFLEKYHSCSH.

D90 serves as the catalytic Proton acceptor. Residues 90–94 (DSGGF), D144, Q189, and G215 contribute to the substrate site. Residues 246–252 (GVGTPEN) are RNA binding. D265 serves as the catalytic Nucleophile. Positions 270 to 274 (TRNAR) are RNA binding; important for wobble base 34 recognition. Positions 303, 305, 308, and 334 each coordinate Zn(2+).

Belongs to the queuine tRNA-ribosyltransferase family. Homodimer. Within each dimer, one monomer is responsible for RNA recognition and catalysis, while the other monomer binds to the replacement base PreQ1. The cofactor is Zn(2+).

The enzyme catalyses 7-aminomethyl-7-carbaguanine + guanosine(34) in tRNA = 7-aminomethyl-7-carbaguanosine(34) in tRNA + guanine. The protein operates within tRNA modification; tRNA-queuosine biosynthesis. Catalyzes the base-exchange of a guanine (G) residue with the queuine precursor 7-aminomethyl-7-deazaguanine (PreQ1) at position 34 (anticodon wobble position) in tRNAs with GU(N) anticodons (tRNA-Asp, -Asn, -His and -Tyr). Catalysis occurs through a double-displacement mechanism. The nucleophile active site attacks the C1' of nucleotide 34 to detach the guanine base from the RNA, forming a covalent enzyme-RNA intermediate. The proton acceptor active site deprotonates the incoming PreQ1, allowing a nucleophilic attack on the C1' of the ribose to form the product. After dissociation, two additional enzymatic reactions on the tRNA convert PreQ1 to queuine (Q), resulting in the hypermodified nucleoside queuosine (7-(((4,5-cis-dihydroxy-2-cyclopenten-1-yl)amino)methyl)-7-deazaguanosine). This chain is Queuine tRNA-ribosyltransferase, found in Helicobacter pylori (strain P12).